The chain runs to 236 residues: Small ribosomal subunit protein uS2c (236 aa).

Belongs to the universal ribosomal protein uS2 family.

It is found in the plastid. It localises to the chloroplast. The sequence is that of Small ribosomal subunit protein uS2c (rps2) from Saccharum hybrid (Sugarcane).